Reading from the N-terminus, the 158-residue chain is Snaclec crotocetin-1 (158 aa).

Residues 1-23 (MGRFIFVSFGLLVVFLSLSGTGA) form the signal peptide. 3 cysteine pairs are disulfide-bonded: Cys27/Cys38, Cys55/Cys152, and Cys127/Cys144. Residues 34 to 153 (YDQYCYRVIK…CEEKNLFVCK (120 aa)) enclose the C-type lectin domain.

The protein belongs to the snaclec family. Heterodimer; disulfide-linked. In terms of tissue distribution, expressed by the venom gland.

The protein resides in the secreted. Its function is as follows. Interferes with one step of hemostasis (modulation of platelet aggregation, or coagulation cascade, for example). The polypeptide is Snaclec crotocetin-1 (Crotalus durissus terrificus (South American rattlesnake)).